Reading from the N-terminus, the 520-residue chain is MSYTSTDSDHNESPAADDNGSDCRSRWDGHALKKGPWSSAEDDILIDYVNKHGEGNWNAVQKHTSLFRCGKSCRLRWANHLRPNLKKGAFSQEEEQLIVELHAKMGNRWARMAAHLPGRTDNEIKNYWNTRIKRRQRAGLPLYPPEMHVEALEWSQEYAKSRVMGEDRRHQDFLQLGSCESNVFFDTLNFTDMVPGTFDLADMTAYKNMGNCASSPRYENFMTPTIPSSKRLWESELLYPGCSSTIKQEFSSPEQFRNTSPQTISKTCSFSVPCDVEHPLYGNRHSPVMIPDSHTPTDGIVPYSKPLYGAVKLELPSFQYSETTFDQWKKSSSPPHSDLLDPFDTYIQSPPPPTGGEESDLYSNFDTGLLDMLLLEAKIRNNSTKNNLYRSCASTIPSADLGQVTVSQTKSEEFDNSLKSFLVHSEMSTQNADETPPRQREKKRKPLLDITRPDVLLASSWLDHGLGIVKETGSMSDALAVLLGDDIGNDYMNMSVGASSGVGSCSWSNMPPVCQMTELP.

The tract at residues methionine 1–arginine 24 is disordered. HTH myb-type domains are found at residues glycine 29–leucine 81 and arginine 82–glutamine 136. 2 consecutive DNA-binding regions (H-T-H motif) follow at residues tryptophan 57–leucine 81 and tryptophan 109–isoleucine 132. Low complexity predominate over residues serine 331–proline 342. Disordered regions lie at residues serine 331–serine 359 and glutamate 426–leucine 447.

As to expression, mostly expressed in stems, shoot apices, flowers and floral shoot tips, and, to a lower extent, in roots (e.g. root tips), seedlings, leaves and siliques.

It is found in the nucleus. Its function is as follows. Transcriptional activator of alpha-amylase expression that binds to 5'-CAACTGTC-3' motif in target gene promoter. Positive regulator of abscisic acid (ABA) responses leading to growth arrest during seed germination. In vegetative tissues, inhibits growth by reducing cell proliferation. Promotes the expression of aleurone-related genes (e.g. CP1, CP, GASA1, BXL1 and BXL2) in seeds. Together with MYB65 and MYB101, promotes the programmed cell death (PCD) the vacuolation of protein storage vacuoles (PSVs) in the aleurone layers during seed germination. Binds to a GARE site (GA-response element) in the LEAFY promoter, essential for its gibberellic acid (GA)-mediated induction. Together with MYB65, facilitates anther and tapetum development. This is Transcription factor MYB33 from Arabidopsis thaliana (Mouse-ear cress).